The sequence spans 546 residues: Src substrate cortactin (546 aa).

The interval 1–28 (MWKASAGHAVSITQDDGGADDWETDPDF) is disordered. A compositionally biased stretch (acidic residues) spans 17–28 (GGADDWETDPDF). Cortactin repeat units follow at residues 80 to 116 (ASHG…SQVD), 117 to 153 (SVRG…SQKD), 154 to 190 (YSSG…SQKD), 191 to 227 (YSKG…SQKD), 228 to 264 (YVKG…SQKD), and 265 to 301 (YKTG…SQQD). Residues Lys-87 and Lys-107 each carry the N6-acetyllysine modification. At Ser-113 the chain carries Phosphoserine. Position 119 is an omega-N-methylarginine (Arg-119). N6-acetyllysine is present on Lys-124. Lys-144 carries the post-translational modification N6-acetyllysine; alternate. Lys-144 participates in a covalent cross-link: Glycyl lysine isopeptide (Lys-Gly) (interchain with G-Cter in SUMO1); alternate. Lys-144 participates in a covalent cross-link: Glycyl lysine isopeptide (Lys-Gly) (interchain with G-Cter in SUMO2); alternate. Ser-150 is subject to Phosphoserine. N6-acetyllysine is present on residues Lys-152, Lys-161, and Lys-171. Lys-181 carries the N6-acetyllysine; alternate modification. Residue Lys-181 forms a Glycyl lysine isopeptide (Lys-Gly) (interchain with G-Cter in SUMO1); alternate linkage. Residue Lys-181 forms a Glycyl lysine isopeptide (Lys-Gly) (interchain with G-Cter in SUMO2); alternate linkage. N6-acetyllysine occurs at positions 193 and 198. Lys-218 participates in a covalent cross-link: Glycyl lysine isopeptide (Lys-Gly) (interchain with G-Cter in SUMO1). Lys-235 carries the N6-acetyllysine modification. Residue Ser-261 is modified to Phosphoserine. Position 272 is an N6-acetyllysine (Lys-272). An N6-acetyllysine; alternate modification is found at Lys-295. Lys-295 is covalently cross-linked (Glycyl lysine isopeptide (Lys-Gly) (interchain with G-Cter in SUMO2); alternate). Residues 302 to 324 (YAKGFGGKYGVQKDRMDKNASTF) form a Cortactin 7; truncated repeat. Lys-304, Lys-309, Lys-314, and Lys-346 each carry N6-acetyllysine. Residues 348–401 (SNIRANFENLAKEREQEDRRKAEAERAQRMAKERQEQEEARRKLEEQARAKKQT) are a coiled coil. Residues 355–424 (ENLAKEREQE…PPSSPIYEDA (70 aa)) form a disordered region. Residues 357–396 (LAKEREQEDRRKAEAERAQRMAKERQEQEEARRKLEEQAR) show a composition bias toward basic and acidic residues. Thr-401 carries the phosphothreonine modification. Phosphoserine occurs at positions 405, 407, 417, and 418. A phosphotyrosine mark is found at Tyr-421 and Tyr-442. Ser-443 carries the phosphoserine modification. Tyr-466 is subject to Phosphotyrosine; by FAK1. Phosphotyrosine; by SRC is present on residues Tyr-482 and Tyr-485. The SH3 domain occupies 488–546 (DLGITAIALYDYQAAGDDEISFDPDDIITNIEMIDDGWWRGVCKGRYGLFPANYVELRQ).

Part of a complex composed of NEDD9, AURKA and CTTN; within the complex NEDD9 acts as a scaffold protein and is required for complex formation. Interacts (via N-terminus) with NEDD9. Identified in a complex containing FGFR4, NCAM1, CDH2, PLCG1, FRS2, SRC, SHC1, GAP43 and CTTN. Forms a complex with ABL1 and MYLK. Interacts with SHANK2 and SHANK3 (via its SH3 domain). Interacts with PLXDC2 and SRCIN1. Interacts with SAMSN1 (via SH3 domain). Interacts (via SH3 domain) with ASAP1 (via Pro-rich region). Interacts (via SH3 domain) with DNM2. Interacts with ACTN1. Interacts with FER. Interacts with KCNA2 (via non-phosphorylated C-terminus). Interacts with FGD1. Interacts with ABL2. Interacts with CTTNBP2NL; this interaction may target CTTN to stress fibers. Interacts with CTTNBP2; this interaction may target CTTN at the cell cortex or dendritic spines. Interacts with KCNH1. Interacts (via SH3 domain) with DIP2A (via N-terminus); the interaction enhances CTTN acetylation and is required for proper synaptic transmission. Interacts with XIRP1 (via N-terminus); the interaction promotes CTTN localization to intercalated disks in cardiomyocytes. Acetylated. In terms of processing, phosphorylated by FER. Phosphorylated in response to FGR activation. Phosphorylation by SRC promotes MYLK binding. Phosphorylated on tyrosine residues in response to CHRM1 activation. Phosphorylated by PTK2/FAK1 in response to cell adhesion. Tyrosine phosphorylation in transformed cells may contribute to cellular growth regulation and transformation. Phosphorylated by PKN2 at both serine and threonine residues in a GTP-bound Rac1-dependent manner in hyaluronan-induced astrocytes and hence down-regulated CTTN ability to associate with filamentous actin. As to expression, expressed at intercalated disks in the heart (at protein level). Expressed in most tissues, except in B-lymphocytes or plasma cells.

It is found in the cytoplasm. The protein localises to the cytoskeleton. Its subcellular location is the cell projection. It localises to the lamellipodium. The protein resides in the ruffle. It is found in the dendrite. The protein localises to the cell membrane. Its subcellular location is the podosome. It localises to the cell junction. The protein resides in the focal adhesion. It is found in the membrane. The protein localises to the clathrin-coated pit. Its subcellular location is the dendritic spine. It localises to the cell cortex. The protein resides in the endoplasmic reticulum. Functionally, contributes to the organization of the actin cytoskeleton and cell shape. Plays a role in the formation of lamellipodia and in cell migration. Plays a role in the regulation of neuron morphology, axon growth and formation of neuronal growth cones. Through its interaction with CTTNBP2, involved in the regulation of neuronal spine density. Plays a role in focal adhesion assembly and turnover. In complex with ABL1 and MYLK regulates cortical actin-based cytoskeletal rearrangement critical to sphingosine 1-phosphate (S1P)-mediated endothelial cell (EC) barrier enhancement. Plays a role in intracellular protein transport and endocytosis, and in modulating the levels of potassium channels present at the cell membrane. Plays a role in receptor-mediated endocytosis via clathrin-coated pits. Required for stabilization of KCNH1 channels at the cell membrane. This is Src substrate cortactin (Cttn) from Mus musculus (Mouse).